The sequence spans 112 residues: Large ribosomal subunit protein bL17 (112 aa).

This sequence belongs to the bacterial ribosomal protein bL17 family. Part of the 50S ribosomal subunit. Contacts protein L32.

This Carboxydothermus hydrogenoformans (strain ATCC BAA-161 / DSM 6008 / Z-2901) protein is Large ribosomal subunit protein bL17.